The primary structure comprises 447 residues: GTPase Der (447 aa).

2 consecutive EngA-type G domains span residues 4 to 165 and 180 to 357; these read QIIA…PKEK and VQIV…KNWN. GTP-binding positions include 10–17, 57–61, 119–122, 186–193, 233–237, and 298–301; these read GRPNVGKS, DTPGL, NKCE, GRPNAGKS, DTAGL, and NKWD. The 86-residue stretch at 358–443 folds into the KH-like domain; sequence KKITTSKLNE…PIRFAYVKTK (86 aa).

It belongs to the TRAFAC class TrmE-Era-EngA-EngB-Septin-like GTPase superfamily. EngA (Der) GTPase family. In terms of assembly, associates with the 50S ribosomal subunit.

Functionally, GTPase that plays an essential role in the late steps of ribosome biogenesis. The protein is GTPase Der of Rickettsia canadensis (strain McKiel).